A 244-amino-acid polypeptide reads, in one-letter code: Ribonuclease PH (244 aa).

Phosphate contacts are provided by residues Arg-86 and 124-126 (GTR).

It belongs to the RNase PH family. As to quaternary structure, homohexameric ring arranged as a trimer of dimers.

The enzyme catalyses tRNA(n+1) + phosphate = tRNA(n) + a ribonucleoside 5'-diphosphate. Phosphorolytic 3'-5' exoribonuclease that plays an important role in tRNA 3'-end maturation. Removes nucleotide residues following the 3'-CCA terminus of tRNAs; can also add nucleotides to the ends of RNA molecules by using nucleoside diphosphates as substrates, but this may not be physiologically important. Probably plays a role in initiation of 16S rRNA degradation (leading to ribosome degradation) during starvation. In Glaesserella parasuis serovar 5 (strain SH0165) (Haemophilus parasuis), this protein is Ribonuclease PH.